A 554-amino-acid polypeptide reads, in one-letter code: DNA mismatch repair protein MutL (554 aa).

The protein belongs to the DNA mismatch repair MutL/HexB family.

Functionally, this protein is involved in the repair of mismatches in DNA. It is required for dam-dependent methyl-directed DNA mismatch repair. May act as a 'molecular matchmaker', a protein that promotes the formation of a stable complex between two or more DNA-binding proteins in an ATP-dependent manner without itself being part of a final effector complex. The protein is DNA mismatch repair protein MutL of Crocosphaera subtropica (strain ATCC 51142 / BH68) (Cyanothece sp. (strain ATCC 51142)).